The following is a 674-amino-acid chain: Protein asunder (674 aa).

A coiled-coil region spans residues H516–S538. Residues L601 to R607 carry the Nuclear localization signal (NLS) motif.

This sequence belongs to the Integrator subunit 13 family. Belongs to the multiprotein complex Integrator, at least composed of IntS1, IntS2, IntS3, IntS4, omd/IntS5, IntS6, defl/IntS7, IntS8, IntS9, IntS10, IntS11, IntS12, asun/IntS13, IntS14 and IntS15. The core complex associates with protein phosphatase 2A subunits mts/PP2A and Pp2A-29B, to form the Integrator-PP2A (INTAC) complex. Post-translationally, phosphorylated.

Its subcellular location is the nucleus. The protein resides in the cytoplasm. It is found in the perinuclear region. Functionally, component of the integrator complex, a multiprotein complex that terminates RNA polymerase II (Pol II) transcription in the promoter-proximal region of genes. The integrator complex provides a quality checkpoint during transcription elongation by driving premature transcription termination of transcripts that are unfavorably configured for transcriptional elongation: the complex terminates transcription by (1) catalyzing dephosphorylation of the C-terminal domain (CTD) of Pol II subunit Polr2A/Rbp1 and Spt5, and (2) degrading the exiting nascent RNA transcript via endonuclease activity. The integrator complex is also involved in the 3'-end processing of the U7 snRNA, and also the spliceosomal snRNAs U1, U2, U4 and U5. The chain is Protein asunder (asun) from Drosophila persimilis (Fruit fly).